Consider the following 364-residue polypeptide: Probable dual-specificity RNA methyltransferase RlmN (364 aa).

Glu107 (proton acceptor) is an active-site residue. One can recognise a Radical SAM core domain in the interval 113–346 (HDYGNSVCVT…ATIRREQGSD (234 aa)). Cys120 and Cys351 form a disulfide bridge. Residues Cys127, Cys131, and Cys134 each contribute to the [4Fe-4S] cluster site. S-adenosyl-L-methionine contacts are provided by residues 177 to 178 (GE), Ser209, 232 to 234 (SLH), and Asn308. The active-site S-methylcysteine intermediate is Cys351.

The protein belongs to the radical SAM superfamily. RlmN family. [4Fe-4S] cluster is required as a cofactor.

It is found in the cytoplasm. The enzyme catalyses adenosine(2503) in 23S rRNA + 2 reduced [2Fe-2S]-[ferredoxin] + 2 S-adenosyl-L-methionine = 2-methyladenosine(2503) in 23S rRNA + 5'-deoxyadenosine + L-methionine + 2 oxidized [2Fe-2S]-[ferredoxin] + S-adenosyl-L-homocysteine. It catalyses the reaction adenosine(37) in tRNA + 2 reduced [2Fe-2S]-[ferredoxin] + 2 S-adenosyl-L-methionine = 2-methyladenosine(37) in tRNA + 5'-deoxyadenosine + L-methionine + 2 oxidized [2Fe-2S]-[ferredoxin] + S-adenosyl-L-homocysteine. In terms of biological role, specifically methylates position 2 of adenine 2503 in 23S rRNA and position 2 of adenine 37 in tRNAs. Confers resistance to some classes of antibiotics. The sequence is that of Probable dual-specificity RNA methyltransferase RlmN from Staphylococcus haemolyticus (strain JCSC1435).